The primary structure comprises 413 residues: Ribulose bisphosphate carboxylase/oxygenase activase, chloroplastic (413 aa).

The N-terminal 54 residues, 1 to 54, are a transit peptide targeting the chloroplast; that stretch reads MAATVSTIGAVNRTTLNNSNYGGLVPNSAFLGSRLKVSSRFTTSKMVTGNFKIV. 162-169 contacts ATP; sequence GGKGQGKS.

The protein belongs to the RuBisCO activase family.

The protein resides in the plastid. The protein localises to the chloroplast stroma. Functionally, activation of RuBisCO (ribulose-1,5-bisphosphate carboxylase/oxygenase; EC 4.1.1.39) involves the ATP-dependent carboxylation of the epsilon-amino group of lysine leading to a carbamate structure. The protein is Ribulose bisphosphate carboxylase/oxygenase activase, chloroplastic of Cucumis sativus (Cucumber).